A 320-amino-acid chain; its full sequence is Ribose-phosphate pyrophosphokinase (320 aa).

ATP is bound by residues 43–45 (DGE) and 102–103 (RQ). Mg(2+) contacts are provided by histidine 136 and aspartate 178. Residue lysine 201 is part of the active site. D-ribose 5-phosphate-binding positions include arginine 203, aspartate 227, and 231–235 (DTAGT).

It belongs to the ribose-phosphate pyrophosphokinase family. Class I subfamily. Homohexamer. Mg(2+) is required as a cofactor.

It localises to the cytoplasm. It catalyses the reaction D-ribose 5-phosphate + ATP = 5-phospho-alpha-D-ribose 1-diphosphate + AMP + H(+). The protein operates within metabolic intermediate biosynthesis; 5-phospho-alpha-D-ribose 1-diphosphate biosynthesis; 5-phospho-alpha-D-ribose 1-diphosphate from D-ribose 5-phosphate (route I): step 1/1. Its function is as follows. Involved in the biosynthesis of the central metabolite phospho-alpha-D-ribosyl-1-pyrophosphate (PRPP) via the transfer of pyrophosphoryl group from ATP to 1-hydroxyl of ribose-5-phosphate (Rib-5-P). This chain is Ribose-phosphate pyrophosphokinase, found in Clostridium tetani (strain Massachusetts / E88).